The sequence spans 461 residues: Chromosomal replication initiator protein DnaA (461 aa).

A domain I, interacts with DnaA modulators region spans residues 1-83; sequence MTASLWQQCL…LHFAVGRRPT (83 aa). The domain II stretch occupies residues 83-124; sequence TAATVQMNTAAAPVADVRIGPAITVPSWTSKQDAMPEINHKS. The tract at residues 125–341 is domain III, AAA+ region; the sequence is NINETYTFEN…GALNRVIANA (217 aa). The ATP site is built by glycine 169, glycine 171, lysine 172, and threonine 173. A domain IV, binds dsDNA region spans residues 342 to 461; sequence RFTGKPINID…YSNLIRTLSS (120 aa).

It belongs to the DnaA family. As to quaternary structure, oligomerizes as a right-handed, spiral filament on DNA at oriC.

It is found in the cytoplasm. Plays an essential role in the initiation and regulation of chromosomal replication. ATP-DnaA binds to the origin of replication (oriC) to initiate formation of the DNA replication initiation complex once per cell cycle. Binds the DnaA box (a 9 base pair repeat at the origin) and separates the double-stranded (ds)DNA. Forms a right-handed helical filament on oriC DNA; dsDNA binds to the exterior of the filament while single-stranded (ss)DNA is stabiized in the filament's interior. The ATP-DnaA-oriC complex binds and stabilizes one strand of the AT-rich DNA unwinding element (DUE), permitting loading of DNA polymerase. After initiation quickly degrades to an ADP-DnaA complex that is not apt for DNA replication. Binds acidic phospholipids. In Tolumonas auensis (strain DSM 9187 / NBRC 110442 / TA 4), this protein is Chromosomal replication initiator protein DnaA.